We begin with the raw amino-acid sequence, 381 residues long: Chaperone protein DnaJ 1 (381 aa).

One can recognise a J domain in the interval 4–68 (DYYGLLGVSR…EKRRIVDLGG (65 aa)). Residues 132 to 214 (GVTKQVTVDT…CMGDGRVRAR (83 aa)) form a CR-type zinc finger. Positions 145, 148, 162, 165, 188, 191, 202, and 205 each coordinate Zn(2+). CXXCXGXG motif repeat units follow at residues 145–152 (CDRCHGKG), 162–169 (CDTCGGRG), 188–195 (CPTCRGVG), and 202–209 (CHQCMGDG).

Belongs to the DnaJ family. In terms of assembly, homodimer. Zn(2+) serves as cofactor.

Its subcellular location is the cytoplasm. Participates actively in the response to hyperosmotic and heat shock by preventing the aggregation of stress-denatured proteins and by disaggregating proteins, also in an autonomous, DnaK-independent fashion. Unfolded proteins bind initially to DnaJ; upon interaction with the DnaJ-bound protein, DnaK hydrolyzes its bound ATP, resulting in the formation of a stable complex. GrpE releases ADP from DnaK; ATP binding to DnaK triggers the release of the substrate protein, thus completing the reaction cycle. Several rounds of ATP-dependent interactions between DnaJ, DnaK and GrpE are required for fully efficient folding. Also involved, together with DnaK and GrpE, in the DNA replication of plasmids through activation of initiation proteins. In Mycolicibacterium paratuberculosis (strain ATCC BAA-968 / K-10) (Mycobacterium paratuberculosis), this protein is Chaperone protein DnaJ 1.